The primary structure comprises 331 residues: NADH-quinone oxidoreductase subunit H (331 aa).

Helical transmembrane passes span 13-33, 80-100, 113-133, 159-179, 183-203, 249-269, 273-293, and 311-331; these read FLISSATVIFLVLNIAAVLTL, WVFLAAPIAMFLPAAAVWLVI, IGLVYFFAITSIGALGVIMAG, LILSLLGVAMLTGSLSMVDIV, AGGFWNWIIWPQLPMFLAFFV, VMSAVASTLFLGGWQPPLPFL, VFNWLWLGIKTTLLIFVFQWI, and KILVPVTILWLFVTAGAMLVI.

This sequence belongs to the complex I subunit 1 family. As to quaternary structure, NDH-1 is composed of 14 different subunits. Subunits NuoA, H, J, K, L, M, N constitute the membrane sector of the complex.

The protein localises to the cell membrane. It carries out the reaction a quinone + NADH + 5 H(+)(in) = a quinol + NAD(+) + 4 H(+)(out). Functionally, NDH-1 shuttles electrons from NADH, via FMN and iron-sulfur (Fe-S) centers, to quinones in the respiratory chain. The immediate electron acceptor for the enzyme in this species is believed to be ubiquinone. Couples the redox reaction to proton translocation (for every two electrons transferred, four hydrogen ions are translocated across the cytoplasmic membrane), and thus conserves the redox energy in a proton gradient. This subunit may bind ubiquinone. In Rubrobacter xylanophilus (strain DSM 9941 / JCM 11954 / NBRC 16129 / PRD-1), this protein is NADH-quinone oxidoreductase subunit H.